Reading from the N-terminus, the 269-residue chain is Zinc transporter ZupT (269 aa).

Helical transmembrane passes span 5–25, 38–58, 75–95, 125–145, 158–178, 190–210, 212–232, and 249–269; these read VLLAFGLTLFAGLATGVGSLI, SLALGFSAGVMIYVSLVEIFV, WMTIAGFFGGMLFIALIDKFI, MGIFTALAIGIHNFPEGIATF, IAIAVAIHNIPEGIAVSVPIF, LSFLSGLAEPVGALVAFLLLM, FLTDVMFGIIFAGVAGIMVFI, and LSMYGLVGGMAVMAISLVLLV. The Fe(2+) site is built by Asn-137 and Glu-140. 2 residues coordinate Zn(2+): Glu-140 and His-165. Fe(2+)-binding residues include Asn-166, Glu-169, and Glu-198. Glu-169 serves as a coordination point for Zn(2+).

This sequence belongs to the ZIP transporter (TC 2.A.5) family. ZupT subfamily.

It is found in the cell membrane. It carries out the reaction Zn(2+)(in) = Zn(2+)(out). Functionally, mediates zinc uptake. May also transport other divalent cations. The sequence is that of Zinc transporter ZupT from Lysinibacillus sphaericus (strain C3-41).